A 535-amino-acid chain; its full sequence is Phosphoenolpyruvate carboxykinase (ATP) (535 aa).

Substrate-binding residues include R59, Y201, and K207. ATP contacts are provided by residues K207, H226, and 243 to 251 (GLSGTGKTT). Residues K207 and H226 each contribute to the Mn(2+) site. Mn(2+) is bound at residue D264. Residues E292, R328, 444–445 (RI), and T450 each bind ATP. Residue R328 participates in substrate binding.

Belongs to the phosphoenolpyruvate carboxykinase (ATP) family. It depends on Mn(2+) as a cofactor.

The protein localises to the cytoplasm. It catalyses the reaction oxaloacetate + ATP = phosphoenolpyruvate + ADP + CO2. It functions in the pathway carbohydrate biosynthesis; gluconeogenesis. In terms of biological role, involved in the gluconeogenesis. Catalyzes the conversion of oxaloacetate (OAA) to phosphoenolpyruvate (PEP) through direct phosphoryl transfer between the nucleoside triphosphate and OAA. The protein is Phosphoenolpyruvate carboxykinase (ATP) of Bacteroides thetaiotaomicron (strain ATCC 29148 / DSM 2079 / JCM 5827 / CCUG 10774 / NCTC 10582 / VPI-5482 / E50).